Here is a 354-residue protein sequence, read N- to C-terminus: Uroporphyrinogen decarboxylase (354 aa).

Substrate is bound by residues 27–31, Asp-77, Tyr-154, Thr-209, and His-327; that span reads RQAGR.

This sequence belongs to the uroporphyrinogen decarboxylase family. As to quaternary structure, homodimer.

It localises to the cytoplasm. It catalyses the reaction uroporphyrinogen III + 4 H(+) = coproporphyrinogen III + 4 CO2. Its pathway is porphyrin-containing compound metabolism; protoporphyrin-IX biosynthesis; coproporphyrinogen-III from 5-aminolevulinate: step 4/4. In terms of biological role, catalyzes the decarboxylation of four acetate groups of uroporphyrinogen-III to yield coproporphyrinogen-III. The chain is Uroporphyrinogen decarboxylase from Hydrogenovibrio crunogenus (strain DSM 25203 / XCL-2) (Thiomicrospira crunogena).